The sequence spans 308 residues: Acetaldehyde dehydrogenase 2 (308 aa).

9–12 lines the NAD(+) pocket; the sequence is SGNI. Cys127 serves as the catalytic Acyl-thioester intermediate. Residues 158–166 and Asn286 contribute to the NAD(+) site; that span reads SAGPGTRAN.

Belongs to the acetaldehyde dehydrogenase family.

The catalysed reaction is acetaldehyde + NAD(+) + CoA = acetyl-CoA + NADH + H(+). This Parafrankia sp. (strain EAN1pec) protein is Acetaldehyde dehydrogenase 2.